A 145-amino-acid polypeptide reads, in one-letter code: Transcriptional regulator MraZ (145 aa).

SpoVT-AbrB domains are found at residues 5-50 (TFNH…ALPQ) and 81-124 (AHEV…DRAA).

It belongs to the MraZ family. In terms of assembly, forms oligomers.

It is found in the cytoplasm. Its subcellular location is the nucleoid. The protein is Transcriptional regulator MraZ of Anaeromyxobacter dehalogenans (strain 2CP-1 / ATCC BAA-258).